The chain runs to 146 residues: ATP synthase epsilon chain (146 aa).

Belongs to the ATPase epsilon chain family. F-type ATPases have 2 components, CF(1) - the catalytic core - and CF(0) - the membrane proton channel. CF(1) has five subunits: alpha(3), beta(3), gamma(1), delta(1), epsilon(1). CF(0) has three main subunits: a, b and c.

The protein localises to the cell membrane. In terms of biological role, produces ATP from ADP in the presence of a proton gradient across the membrane. The polypeptide is ATP synthase epsilon chain (Lactobacillus helveticus (strain DPC 4571)).